The sequence spans 119 residues: Large ribosomal subunit protein bL20 (119 aa).

The protein belongs to the bacterial ribosomal protein bL20 family.

Binds directly to 23S ribosomal RNA and is necessary for the in vitro assembly process of the 50S ribosomal subunit. It is not involved in the protein synthesizing functions of that subunit. This is Large ribosomal subunit protein bL20 from Streptococcus thermophilus (strain ATCC BAA-491 / LMD-9).